Reading from the N-terminus, the 66-residue chain is Potassium channel toxin alpha-KTx 30.3 (66 aa).

An N-terminal signal peptide occupies residues 1 to 24; sequence MNKTFFLVVIMATVLVLAFDATDA. Disulfide bonds link Cys30–Cys50, Cys36–Cys55, and Cys40–Cys57.

It belongs to the short scorpion toxin superfamily. Potassium channel inhibitor family. Alpha-KTx 30 subfamily. As to expression, expressed by the venom gland.

It is found in the secreted. Functionally, inhibits Kv1.3/KCNA3 channel. In Scorpiops jendeki (Scorpion), this protein is Potassium channel toxin alpha-KTx 30.3.